A 130-amino-acid polypeptide reads, in one-letter code: Small ribosomal subunit protein uS8 (130 aa).

This sequence belongs to the universal ribosomal protein uS8 family. In terms of assembly, part of the 30S ribosomal subunit. Contacts proteins S5 and S12.

Functionally, one of the primary rRNA binding proteins, it binds directly to 16S rRNA central domain where it helps coordinate assembly of the platform of the 30S subunit. This is Small ribosomal subunit protein uS8 from Aster yellows witches'-broom phytoplasma (strain AYWB).